A 448-amino-acid chain; its full sequence is MKSLSLLLAVALGLATAVSAGPAVIECWFVEDASGKGLAKRPGALLLRQGPGEPPPRPDLDPELYLSVHDPAGALQAAFRRYPRGAPAPHCEMSRFVPLPASAKWASGLTPAQNCPRALDGAWLMVSISSPVLSLSSLLRPQPEPQQEPVLITMATVVLTVLTHTPAPRVRLGQDALLDLSFAYMPPTSEAASSLAPGPPPFGLEWRRQHLGKGHLLLAATPGLNGQMPAAQEGAVAFAAWDDDEPWGPWTGNGTFWLPTVQPFQEGTYLATIHLPYLQGQVTLELAVYKPPKVSLMPATLARAAPGEAPPELLCLVSHFYPSGGLEVEWELRGGPGGRSQKAEGQRWLSALRHHSDGSVSLSGHLQPPPVTTEQHGARYACRIHHPSLPASGRSAEVTLEVAGLSGPSLEDSVGLFLSAFLLLGLFKALGWAAVYLSTCKDSKKKAE.

Residues 1–20 (MKSLSLLLAVALGLATAVSA) form the signal peptide. Residues 21–414 (GPAVIECWFV…LSGPSLEDSV (394 aa)) lie on the Lumenal side of the membrane. An intrachain disulfide couples Cys-27 to Cys-91. An N-linked (GlcNAc...) asparagine glycan is attached at Asn-253. An Ig-like C1-type domain is found at 292–399 (PKVSLMPATL…PASGRSAEVT (108 aa)). Cysteines 315 and 382 form a disulfide. The chain crosses the membrane as a helical span at residues 415–435 (GLFLSAFLLLGLFKALGWAAV). Residues 436 to 448 (YLSTCKDSKKKAE) are Cytoplasmic-facing.

As to quaternary structure, heterodimer with PDIA3; disulfide-linked. Obligatory mediator for the interaction between newly assembled MHC class I molecules, calreticulin, PDIA3 and TAP. Up to 4 MHC class I/tapasin complexes bind to 1 TAP. Interacts with HLA-G-B2M complex; this interaction is required for loading of high affinity peptides. On its own or as part of MHC class I peptide loading complex, interacts with ligand-free MR1 or MR1-B2M complex, providing for stable MR1 pools ready for metabolite antigen processing. As to expression, neutrophils, mostly in fully differentiated cells.

It is found in the endoplasmic reticulum membrane. In terms of biological role, involved in the association of MHC class I with transporter associated with antigen processing (TAP) and in the assembly of MHC class I with peptide (peptide loading). This chain is Tapasin, found in Homo sapiens (Human).